We begin with the raw amino-acid sequence, 465 residues long: MELGNTRCVHIVGIGGAGMSAIAELLLKSGFTVTGSDLVASEVTGKLQDQGAAVALGHSAENIGACDVVVYSSAVAASENEEVAAALQKGIPVIKRDEMLGELMRYKSGICVAGTHGKTTTTAMIATMLIGAGESPTVMIGGISDDLKGSTMVGSGKYMVIEADEYDRAFLKLTPSLAVINSLEMEHTDTYADIEALRDAFVAFANKVPFYGRVFCCVDWPEVRKIIPRMNRRLFTYGIEESADLMARDIQIVGHETRFTVDYQKQEMARVSIAAPGRHNVHNALAAIATGLEMGLPVDSIVSGLASFSGMRRRFQILYGRAGGPVIVDDYAHHPSEVKAAVKAARAGWPEHEVIAVFQPHLFSRTTAFADEYGWALSNADRVCVADVFAAREKTADYPGVSGELVAEAALMAGAQQVSFIPDREELCTTLQGYCVPGNLLLCMGAGDITKMASELADHCRKNEP.

114 to 120 contacts ATP; the sequence is GTHGKTT.

It belongs to the MurCDEF family.

Its subcellular location is the cytoplasm. The catalysed reaction is UDP-N-acetyl-alpha-D-muramate + L-alanine + ATP = UDP-N-acetyl-alpha-D-muramoyl-L-alanine + ADP + phosphate + H(+). It participates in cell wall biogenesis; peptidoglycan biosynthesis. Functionally, cell wall formation. The sequence is that of UDP-N-acetylmuramate--L-alanine ligase from Chlorobium phaeobacteroides (strain BS1).